Consider the following 86-residue polypeptide: MKCSLRLFEKAGRLSVRSQTVQTFQQRIVLANGASYLVNTTLPKPYILSIKDITNMPLNNPKVNALSSIRGQESRRSKFEERYEGL.

A mitochondrion-targeting transit peptide spans 1–18; that stretch reads MKCSLRLFEKAGRLSVRS.

The protein belongs to the bacterial ribosomal protein bL31 family. Highly divergent. In terms of assembly, component of the mitochondrial large ribosomal subunit (mt-LSU). Mature yeast 74S mitochondrial ribosomes consist of a small (37S) and a large (54S) subunit. The 37S small subunit contains a 15S ribosomal RNA (15S mt-rRNA) and at least 32 different proteins. The 54S large subunit contains a 21S rRNA (21S mt-rRNA) and at least 45 different proteins.

It localises to the mitochondrion. Its function is as follows. Component of the mitochondrial ribosome (mitoribosome), a dedicated translation machinery responsible for the synthesis of mitochondrial genome-encoded proteins, including at least some of the essential transmembrane subunits of the mitochondrial respiratory chain. The mitoribosomes are attached to the mitochondrial inner membrane and translation products are cotranslationally integrated into the membrane. This chain is Large ribosomal subunit protein bL31m (tam9), found in Schizosaccharomyces pombe (strain 972 / ATCC 24843) (Fission yeast).